The primary structure comprises 75 residues: U6-lycotoxin-Ls1b (75 aa).

An N-terminal signal peptide occupies residues 1 to 21 (MKLLLFTALVLVVISLIEVEA). Residues 22–25 (ENER) constitute a propeptide that is removed on maturation.

It belongs to the neurotoxin 19 (CSTX) family. 06 (U6-Lctx) subfamily. Contains 4 disulfide bonds. In terms of tissue distribution, expressed by the venom gland.

The protein localises to the secreted. The polypeptide is U6-lycotoxin-Ls1b (Lycosa singoriensis (Wolf spider)).